Here is a 359-residue protein sequence, read N- to C-terminus: Probable C-C chemokine receptor type 3 (359 aa).

The Extracellular segment spans residues 1–38; sequence MAFNTDEIKTVVESFETTPYEYEWAPPCEKVRIKELGS. The chain crosses the membrane as a helical span at residues 39–64; sequence WLLPPLYSLVFIIGLLGNMMVVLILI. Residues 65–68 lie on the Cytoplasmic side of the membrane; sequence KYRK. The helical transmembrane segment at 69 to 95 threads the bilayer; sequence LQIMTNIYLFNLAISDLLFLFTVPFWI. Residues 96–111 lie on the Extracellular side of the membrane; sequence HYVLWNEWGFGHYMCK. Cys110 and Cys187 are oxidised to a cystine. A helical transmembrane segment spans residues 112 to 133; sequence MLSGFYYLALYSEIFFIILLTI. The Cytoplasmic portion of the chain corresponds to 134-150; the sequence is DRYLAIVHAVFALRART. A helical transmembrane segment spans residues 151–175; sequence VTFATITSIITWGLAGLAALPEFIF. Topologically, residues 176 to 201 are extracellular; it reads HESQDSFGEFSCSPRYPEGEEDSWKR. A helical membrane pass occupies residues 202–227; sequence FHALRMNIFGLALPLLIMVICYSGII. The Cytoplasmic portion of the chain corresponds to 228–243; that stretch reads KTLLRCPNKKKHKAIR. Residues 244–268 form a helical membrane-spanning segment; that stretch reads LIFVVMIVFFIFWTPYNLVLLFSAF. At 269-285 the chain is on the extracellular side; sequence HSTFLETSCQQSKHLDL. A helical membrane pass occupies residues 286–309; the sequence is AMQVTEVIAYTHCCINPVIYAFVG. Residues 310 to 359 lie on the Cytoplasmic side of the membrane; the sequence is ERFRKHLRLFFHRNVAVYLGKYIPFLPGEKMERTSSVSPSTGEQEISVVF.

It belongs to the G-protein coupled receptor 1 family. Detected in skeletal muscle and in trace amounts in leukocytes.

Its subcellular location is the cell membrane. Receptor for C-C type chemokine. Binds and responds to a variety of chemokines, including CCL11, CCL26, CCL7, CCL13, RANTES(CCL5) and CCL15. Subsequently transduces a signal by increasing the intracellular calcium ions level. In addition acts as a possible functional receptor for NARS1. In Mus musculus (Mouse), this protein is Probable C-C chemokine receptor type 3 (Ccr3).